Here is a 434-residue protein sequence, read N- to C-terminus: MTGIVEVIGREILDSRGNPTVEVDVILECGAKGRAAVPSGASTGSHEAVELRDEDKGRYLGKGVLKAVNNVNTEIREALLGMDALNQVEIDKVMLELDRTPNKGRLGANAILGVSLAVAKAAAEALGQPLYKYLGGVNSKELPLPMMNILNGGAHADSAVDLQEFMIQPVGAKSFREAMQMGAEVFHHLGKILKANGDSTNVGNEGGYAPSKIQGTEGALALISEAVKAAGYELGKDITFALDAASSEFCKEVNGKYEYHFKREGGVVRTTDEMIKWYEELINKYPIVSIEDGLGEDDWDGWVKLTKAIGDRVQIVGDDLFVTNTERLKKGIELGAGNSILIKLNQIGSLTETLDAIEMAKRAGYTAVVSHRSGETEDATIADVAVATNAGQIKTGSTSRTDRMAKYNQLLRIEEELGSVAQYNGRDVFYNIKK.

Q163 lines the (2R)-2-phosphoglycerate pocket. E205 serves as the catalytic Proton donor. The Mg(2+) site is built by D243, E291, and D318. Residues K343, R372, S373, and K394 each contribute to the (2R)-2-phosphoglycerate site. K343 acts as the Proton acceptor in catalysis.

It belongs to the enolase family. It depends on Mg(2+) as a cofactor.

It localises to the cytoplasm. It is found in the secreted. The protein resides in the cell surface. The enzyme catalyses (2R)-2-phosphoglycerate = phosphoenolpyruvate + H2O. It functions in the pathway carbohydrate degradation; glycolysis; pyruvate from D-glyceraldehyde 3-phosphate: step 4/5. Functionally, catalyzes the reversible conversion of 2-phosphoglycerate (2-PG) into phosphoenolpyruvate (PEP). It is essential for the degradation of carbohydrates via glycolysis. This is Enolase from Fusobacterium nucleatum subsp. nucleatum (strain ATCC 25586 / DSM 15643 / BCRC 10681 / CIP 101130 / JCM 8532 / KCTC 2640 / LMG 13131 / VPI 4355).